Reading from the N-terminus, the 92-residue chain is Large ribosomal subunit protein eL43 (92 aa).

The segment at 39–60 adopts a C4-type zinc-finger fold; it reads CSFCGKKTVRRGAAGIWSCHSC.

It belongs to the eukaryotic ribosomal protein eL43 family.

In Candida glabrata (strain ATCC 2001 / BCRC 20586 / JCM 3761 / NBRC 0622 / NRRL Y-65 / CBS 138) (Yeast), this protein is Large ribosomal subunit protein eL43 (RPL43).